A 29-amino-acid polypeptide reads, in one-letter code: Glucagon (29 aa).

The protein belongs to the glucagon family.

It is found in the secreted. Glucagon plays a key role in glucose metabolism and homeostasis. Regulates blood glucose by increasing gluconeogenesis and decreasing glycolysis. This is Glucagon (GCG) from Meleagris gallopavo (Wild turkey).